The primary structure comprises 298 residues: Acetylglutamate kinase (298 aa).

Substrate contacts are provided by residues 68–69, arginine 90, and asparagine 195; that span reads GG.

Belongs to the acetylglutamate kinase family. ArgB subfamily.

Its subcellular location is the cytoplasm. The catalysed reaction is N-acetyl-L-glutamate + ATP = N-acetyl-L-glutamyl 5-phosphate + ADP. The protein operates within amino-acid biosynthesis; L-arginine biosynthesis; N(2)-acetyl-L-ornithine from L-glutamate: step 2/4. Its function is as follows. Catalyzes the ATP-dependent phosphorylation of N-acetyl-L-glutamate. The sequence is that of Acetylglutamate kinase from Hydrogenovibrio crunogenus (strain DSM 25203 / XCL-2) (Thiomicrospira crunogena).